The sequence spans 89 residues: Small ribosomal subunit protein uS15 (89 aa).

The protein belongs to the universal ribosomal protein uS15 family. In terms of assembly, part of the 30S ribosomal subunit. Forms a bridge to the 50S subunit in the 70S ribosome, contacting the 23S rRNA.

In terms of biological role, one of the primary rRNA binding proteins, it binds directly to 16S rRNA where it helps nucleate assembly of the platform of the 30S subunit by binding and bridging several RNA helices of the 16S rRNA. Its function is as follows. Forms an intersubunit bridge (bridge B4) with the 23S rRNA of the 50S subunit in the ribosome. This is Small ribosomal subunit protein uS15 from Kocuria rhizophila (strain ATCC 9341 / DSM 348 / NBRC 103217 / DC2201).